A 718-amino-acid polypeptide reads, in one-letter code: Polyribonucleotide nucleotidyltransferase (718 aa).

Mg(2+) is bound by residues D497 and D503. A KH domain is found at 564–623; that stretch reads PRLLTLKIEPEHIGMVIGPGGKTIKGITEQTSCKIDIADDGTVTIASSEGERAERARQMI. In terms of domain architecture, S1 motif spans 633–701; that stretch reads GEVYLGRVTR…SKGRLNLTRL (69 aa).

The protein belongs to the polyribonucleotide nucleotidyltransferase family. In terms of assembly, interacts with RNase E (rne). It depends on Mg(2+) as a cofactor.

The protein localises to the cytoplasm. It catalyses the reaction RNA(n+1) + phosphate = RNA(n) + a ribonucleoside 5'-diphosphate. Its function is as follows. Involved in mRNA degradation. Catalyzes the phosphorolysis of single-stranded polyribonucleotides processively in the 3'- to 5'-direction. This Synechocystis sp. (strain ATCC 27184 / PCC 6803 / Kazusa) protein is Polyribonucleotide nucleotidyltransferase.